Consider the following 565-residue polypeptide: Putative pentatricopeptide repeat-containing protein At3g05240 (565 aa).

13 PPR repeats span residues 37 to 70 (NVIP…IDCP), 71 to 105 (SVYI…GYSP), 106 to 140 (DYFT…GFEV), 141 to 171 (NMYV…IPQW), 172 to 206 (NVVA…GVKA), 207 to 241 (NETI…GFDP), 250 to 280 (NVIL…MPER), 281 to 315 (TLVS…GIAP), 316 to 350 (DKVT…GFVK), 351 to 381 (DAAI…LEKK), 382 to 416 (DTIA…GNAT), 418 to 448 (DGIT…MRDL), and 454 to 484 (TVEH…MPVK). Positions 489–564 (IWGALLNGCD…VLGHSSVETM (76 aa)) are type E motif.

The protein belongs to the PPR family. PCMP-E subfamily.

The polypeptide is Putative pentatricopeptide repeat-containing protein At3g05240 (PCMP-E82) (Arabidopsis thaliana (Mouse-ear cress)).